The sequence spans 235 residues: Peptidase E (235 aa).

Catalysis depends on charge relay system residues Ser122, Asp137, and His159.

This sequence belongs to the peptidase S51 family.

Its subcellular location is the cytoplasm. It carries out the reaction Dipeptidase E catalyzes the hydrolysis of dipeptides Asp-|-Xaa. It does not act on peptides with N-terminal Glu, Asn or Gln, nor does it cleave isoaspartyl peptides.. In terms of biological role, hydrolyzes dipeptides containing N-terminal aspartate residues. May play a role in allowing the cell to use peptide aspartate to spare carbon otherwise required for the synthesis of the aspartate family of amino acids. The protein is Peptidase E of Shewanella amazonensis (strain ATCC BAA-1098 / SB2B).